The following is a 333-amino-acid chain: 4-hydroxyproline epimerase (333 aa).

Residue Cys-90 is the Proton acceptor of the active site. Residues 91 to 92 (GH) and Asp-249 contribute to the substrate site. Cys-253 (proton donor) is an active-site residue. 254 to 255 (GT) serves as a coordination point for substrate.

The protein belongs to the proline racemase family. In terms of assembly, homodimer.

It catalyses the reaction trans-4-hydroxy-L-proline = cis-4-hydroxy-D-proline. Its function is as follows. Allows intracellular utilization of 4-hydroxyproline, one of the major constituents of host collagen, by converting 4-hydroxy-L-proline to 4-hydroxy-D-proline, which can be further metabolized by intracellular 4-hydroxy-D-proline oxidases. Strong B-cell mitogen. Plays an important role in the regulation of intra- and extracellular amino acid pools, allowing the bacterium to profit from host precursors and enzymatic pathways. The protein is 4-hydroxyproline epimerase of Brucella abortus (strain S19).